The sequence spans 818 residues: FAD-dependent monooxygenase anuJ (818 aa).

Positions 46, 60, 122, 329, and 342 each coordinate FAD. A run of 3 helical transmembrane segments spans residues 471 to 491 (VLWALPLLGMAVAGLLTMFSV), 539 to 559 (FFYQPFSFFADYGVWYGIMLV), and 571 to 591 (LSFALLWGMLNMWGIAIFVPI). A glycan (N-linked (GlcNAc...) asparagine) is linked at Asn-614. 2 helical membrane passes run 621–641 (ILPVLLATHYATFMDAYLSPV) and 647–667 (AAGFLWELFPVWLSLAQAGLA). Asn-683 is a glycosylation site (N-linked (GlcNAc...) asparagine). The next 2 membrane-spanning stretches (helical) occupy residues 743–763 (WDQVFFAIPNLFWIILLFADL) and 778–798 (FSALGLIIAGGNGTMLGLMWL).

This sequence belongs to the paxM FAD-dependent monooxygenase family.

It localises to the membrane. Its function is as follows. Highly reducing polyketide synthase; part of the gene cluster that mediates the biosynthesis of annullatin D, an alkylated aromatic polyketide with a fused dihydrobenzofuran lactone ring system that exhibits potent agonistic activities toward the cannabinoid receptors. AnuJ does not seem to play a role within the pathway. The annullatin backbone 2-hydroxymethyl-3-pentylphenol is assembled from one acetyl-CoA starter unit and 5 malonyl-CoA elongation units by cooperation of the highly reducing polyketide synthase anuA, the short-chain dehydrogenase anuB and the oxidoreductase anuC, before being hydroxylated at the C-5 alkyl chain by the cytochrome P450 monooxygenase anuE to form (8S)-annullatin E. The prenyltransferase anuH subsequently installs one isoprenyl group at the benzene ring to form (8S)-annullatin J. Enzymatic or nonenzymatic dihydro-benzofuran ring formation between the prenyl and the phenolic hydroxyl groups in (8S)-annullatin J results in two diastereomers (2S,9S)-annullatin H and compound 12. The intermediate (2S,9S)-annullatin H is then converted to (2S,9S)-annullatin D by the FAD-linked oxidoreductase anuG-catalyzed five-member lactone ring formation. The isomer 12 acts as a substrate for the short-chain dehydrogenase anuF and is oxidized to (2R)-annullatin F, which is subsequently acetylated by an acetyltransferase leading to (2R)-annullatin G formation. The remaining enzymes identified within the cluster, anuD, anuI and anuJ, seem not to be involved in annullatin biosynthesis. This chain is FAD-dependent monooxygenase anuJ, found in Penicillium roqueforti (strain FM164).